The chain runs to 147 residues: UPF0306 protein YhbP (147 aa).

It belongs to the UPF0306 family.

This Escherichia coli (strain SMS-3-5 / SECEC) protein is UPF0306 protein YhbP.